The primary structure comprises 38 residues: Anthranilate phosphoribosyltransferase (38 aa).

The protein belongs to the anthranilate phosphoribosyltransferase family. In terms of assembly, homodimer.

The enzyme catalyses N-(5-phospho-beta-D-ribosyl)anthranilate + diphosphate = 5-phospho-alpha-D-ribose 1-diphosphate + anthranilate. It functions in the pathway amino-acid biosynthesis; L-tryptophan biosynthesis; L-tryptophan from chorismate: step 2/5. Its function is as follows. Catalyzes the transfer of the phosphoribosyl group of 5-phosphorylribose-1-pyrophosphate (PRPP) to anthranilate to yield N-(5'-phosphoribosyl)-anthranilate (PRA). This is Anthranilate phosphoribosyltransferase (trpD) from Serratia marcescens.